The following is a 559-amino-acid chain: Laccase-7 (559 aa).

An N-terminal signal peptide occupies residues 1-28 (MVIPWCSSMMRLLWFLFALLLARSVADA). N-linked (GlcNAc...) asparagine glycosylation is found at Asn32, Asn47, and Asn82. 2 Plastocyanin-like domains span residues 36–152 (TVES…PRNG) and 163–316 (EVPI…YNTT). Cu cation contacts are provided by His86 and His88. Asn112 and Asn120 each carry an N-linked (GlcNAc...) asparagine glycan. Positions 131 and 133 each coordinate Cu cation. N-linked (GlcNAc...) asparagine glycans are attached at residues Asn151, Asn210, Asn220, Asn257, Asn278, Asn314, Asn363, and Asn443. The Plastocyanin-like 3 domain occupies 396–543 (FRLPSQMSLL…GMVFAVDNGT (148 aa)). Cu cation is bound by residues His461, His464, and His466. N-linked (GlcNAc...) asparagine glycosylation is present at Asn484. 4 residues coordinate Cu cation: His522, Cys523, His524, and His528. A glycan (N-linked (GlcNAc...) asparagine) is linked at Asn541.

This sequence belongs to the multicopper oxidase family. Requires Cu cation as cofactor.

The protein localises to the secreted. Its subcellular location is the extracellular space. The protein resides in the apoplast. It catalyses the reaction 4 hydroquinone + O2 = 4 benzosemiquinone + 2 H2O. Functionally, lignin degradation and detoxification of lignin-derived products. This chain is Laccase-7 (LAC7), found in Oryza sativa subsp. japonica (Rice).